The following is a 365-amino-acid chain: Chorismate synthase (365 aa).

Arg48 contacts NADP(+). Residues Arg125 to Ser127, Gly286, Lys301 to Ser305, and Arg328 each bind FMN.

It belongs to the chorismate synthase family. FMNH2 serves as cofactor.

The catalysed reaction is 5-O-(1-carboxyvinyl)-3-phosphoshikimate = chorismate + phosphate. It functions in the pathway metabolic intermediate biosynthesis; chorismate biosynthesis; chorismate from D-erythrose 4-phosphate and phosphoenolpyruvate: step 7/7. Catalyzes the anti-1,4-elimination of the C-3 phosphate and the C-6 proR hydrogen from 5-enolpyruvylshikimate-3-phosphate (EPSP) to yield chorismate, which is the branch point compound that serves as the starting substrate for the three terminal pathways of aromatic amino acid biosynthesis. This reaction introduces a second double bond into the aromatic ring system. The sequence is that of Chorismate synthase from Methanosphaera stadtmanae (strain ATCC 43021 / DSM 3091 / JCM 11832 / MCB-3).